An 84-amino-acid polypeptide reads, in one-letter code: Toxin To7 (84 aa).

Positions 1 to 20 (MSIFPIVLALLLIGLEETEA) are cleaved as a signal peptide. The LCN-type CS-alpha/beta domain occupies 21-83 (LDGYPLSKIN…KMYPGSSPCY (63 aa)). Intrachain disulfides connect Cys-32/Cys-82, Cys-36/Cys-59, Cys-42/Cys-64, and Cys-46/Cys-66.

Expressed by the venom gland.

The protein resides in the secreted. Its function is as follows. Inhibits voltage-gated sodium channels (Nav). This chain is Toxin To7, found in Tityus obscurus (Amazonian scorpion).